The following is a 351-amino-acid chain: Amylovoran biosynthesis glycosyltransferase AmsD (351 aa).

The protein belongs to the glycosyltransferase group 1 family. Glycosyltransferase 4 subfamily.

Its pathway is glycan metabolism; exopolysaccharide biosynthesis. Functionally, involved in the biosynthesis of amylovoran which functions as a virulence factor. May be involved in the formation of galactose alpha-1,6 linkages in amylovoran. The sequence is that of Amylovoran biosynthesis glycosyltransferase AmsD (amsD) from Erwinia amylovora (Fire blight bacteria).